Reading from the N-terminus, the 224-residue chain is 7-cyano-7-deazaguanine synthase (224 aa).

14 to 24 provides a ligand contact to ATP; the sequence is FSGGQDSTTCL. 4 residues coordinate Zn(2+): Cys190, Cys198, Cys201, and Cys204.

It belongs to the QueC family. Requires Zn(2+) as cofactor.

The catalysed reaction is 7-carboxy-7-deazaguanine + NH4(+) + ATP = 7-cyano-7-deazaguanine + ADP + phosphate + H2O + H(+). It participates in purine metabolism; 7-cyano-7-deazaguanine biosynthesis. In terms of biological role, catalyzes the ATP-dependent conversion of 7-carboxy-7-deazaguanine (CDG) to 7-cyano-7-deazaguanine (preQ(0)). The protein is 7-cyano-7-deazaguanine synthase of Haemophilus ducreyi (strain 35000HP / ATCC 700724).